Consider the following 114-residue polypeptide: MTVNIYDDANQMATNLQTLPQFLGLQNAFAALKKDDIAFTMFKKFQTQQMTLQQKQMQGEELTDDEIQEIQELAQKIGDIDAIKNLMEQERQLSQLMDELNQIISKPIADIYQG.

The protein belongs to the UPF0342 family.

The chain is UPF0342 protein LCA_0622 from Latilactobacillus sakei subsp. sakei (strain 23K) (Lactobacillus sakei subsp. sakei).